The following is a 643-amino-acid chain: Protein RTF1 homolog (643 aa).

Disordered regions lie at residues 1–107 (MGDL…YKNE) and 124–262 (ILSE…SDVP). The residue at position 2 (G2) is an N-acetylglycine. A compositionally biased stretch (basic and acidic residues) spans 65 to 77 (KRLEAEREDRAAR). Phosphoserine is present on S87. Basic and acidic residues predominate over residues 124–157 (ILSERADKKGDKNFTEKLRSKRESEKTPVSKKET). The segment covering 162 to 171 (ASRGVRSSAR) has biased composition (low complexity). The segment covering 172–188 (SADRAAAKDDALNELRA) has biased composition (basic and acidic residues). Positions 225–235 (SSNLSSSSQSD) are enriched in low complexity. Residues 261–396 (VPTFEDVKEV…KKEAIQRTNS (136 aa)) enclose the Plus3 domain.

In terms of assembly, component of the nuclear PAF1 complex (PAF1C), which consists of VIP2/ELF7/PAF1, VIP3/SKI8/WDR61, VIP4/LEO1, VIP5/RTF1, VIP6/ELF8/CTR9 and CDC73.

It localises to the nucleus. Component of the PAF1 complex (PAF1C) which is involved in histone modifications such as methylation on histone H3 'Lys-4' (H3K4me3). Involved in regulation of flowering time. Required for the expression of the flowering repressors and FLC and MADS-box genes of the MAF family. Involved in the control of seed dormancy and germination. The protein is Protein RTF1 homolog of Arabidopsis thaliana (Mouse-ear cress).